Here is a 361-residue protein sequence, read N- to C-terminus: Peptide chain release factor 1 (361 aa).

Position 236 is an N5-methylglutamine (Gln236). Residues 285-309 show a composition bias toward basic and acidic residues; that stretch reads TAKDSARAADRKAQVGSGDRSERIR. Residues 285–311 are disordered; that stretch reads TAKDSARAADRKAQVGSGDRSERIRTY.

This sequence belongs to the prokaryotic/mitochondrial release factor family. Post-translationally, methylated by PrmC. Methylation increases the termination efficiency of RF1.

Its subcellular location is the cytoplasm. Functionally, peptide chain release factor 1 directs the termination of translation in response to the peptide chain termination codons UAG and UAA. In Methylorubrum extorquens (strain CM4 / NCIMB 13688) (Methylobacterium extorquens), this protein is Peptide chain release factor 1.